The sequence spans 497 residues: Reticulophagy regulator 1 (497 aa).

A disordered region spans residues Met-1–Glu-51. Over Met-1 to Glu-59 the chain is Cytoplasmic. Low complexity predominate over residues Gly-13–Ala-23. A helical membrane pass occupies residues Ala-60–Gly-80. Residues Cys-81–Ser-95 are Lumenal-facing. The interval Asp-84–Phe-233 is reticulon homology domain. A helical transmembrane segment spans residues Leu-96–Val-116. Residues Tyr-117–His-118 lie on the Cytoplasmic side of the membrane. Residues Leu-119–Ser-139 traverse the membrane as a helical segment. At Arg-140 to Thr-208 the chain is on the lumenal side. A Phosphoserine modification is found at Ser-149. A Phosphoserine; by CAMK2B modification is found at Ser-151. Residue Ser-153 is modified to Phosphoserine. Residues Ile-209 to Leu-229 traverse the membrane as a helical segment. The Cytoplasmic segment spans residues Cys-230 to His-497. Positions Phe-319 to Asp-330 are enriched in polar residues. 4 disordered regions span residues Phe-319–Leu-365, Lys-377–Leu-396, Leu-436–Phe-455, and Ser-468–His-497. 2 stretches are compositionally biased toward basic and acidic residues: residues Asp-334–Ser-348 and Lys-377–Lys-388. Positions Pro-443–Phe-455 are enriched in acidic residues. Positions Asp-453–Leu-458 match the LIR motif motif. Residues Gly-471–Leu-490 show a composition bias toward polar residues.

The protein belongs to the RETREG family. As to quaternary structure, homooligomer; oligomerization is enhanced following endoplasmic reticulum stress and is mediated by the reticulon homology domain. Interacts with ATG8 family modifier proteins MAP1LC3A, MAP1LC3B, MAP1LC3C, GABARAP, GABARAPL1 and GABARAPL2. Shows higher affinity for GABARAPL1 than for MAP1LC3A or MAP1LC3B. In terms of processing, phosphorylation at Ser-151 by CAMK2B enhances oligomerization and membrane scission and reticulophagy activity. In terms of tissue distribution, overexpressed in esophageal squamous cell carcinoma.

The protein localises to the golgi apparatus. The protein resides in the cis-Golgi network membrane. It is found in the endoplasmic reticulum membrane. Its function is as follows. Endoplasmic reticulum (ER)-anchored autophagy regulator which mediates ER delivery into lysosomes through sequestration into autophagosomes. Promotes membrane remodeling and ER scission via its membrane bending capacity and targets the fragments into autophagosomes via interaction with ATG8 family proteins. Active under basal conditions. Required for collagen quality control in a LIR motif-dependent manner. Required for long-term survival of nociceptive and autonomic ganglion neurons. (Microbial infection) During SARS-CoV-2 infection, RETREG1-mediated reticulophagy is promoted by SARS-CoV-2 ORF3A protein. This induces endoplasmic reticulum stress and inflammatory responses and facilitates viral infection. The protein is Reticulophagy regulator 1 of Homo sapiens (Human).